A 126-amino-acid chain; its full sequence is Aspartate 1-decarboxylase (126 aa).

Ser25 functions as the Schiff-base intermediate with substrate; via pyruvic acid in the catalytic mechanism. Position 25 is a pyruvic acid (Ser) (Ser25). Thr57 serves as a coordination point for substrate. The Proton donor role is filled by Tyr58. 73–75 (GAA) lines the substrate pocket.

It belongs to the PanD family. As to quaternary structure, heterooctamer of four alpha and four beta subunits. Pyruvate is required as a cofactor. Post-translationally, is synthesized initially as an inactive proenzyme, which is activated by self-cleavage at a specific serine bond to produce a beta-subunit with a hydroxyl group at its C-terminus and an alpha-subunit with a pyruvoyl group at its N-terminus.

It localises to the cytoplasm. The enzyme catalyses L-aspartate + H(+) = beta-alanine + CO2. It functions in the pathway cofactor biosynthesis; (R)-pantothenate biosynthesis; beta-alanine from L-aspartate: step 1/1. In terms of biological role, catalyzes the pyruvoyl-dependent decarboxylation of aspartate to produce beta-alanine. The chain is Aspartate 1-decarboxylase from Cellvibrio japonicus (strain Ueda107) (Pseudomonas fluorescens subsp. cellulosa).